The following is a 400-amino-acid chain: Glutamyl-tRNA reductase (400 aa).

Substrate-binding positions include 45 to 48 (TCNR), S103, 108 to 110 (EDQ), and Q114. The active-site Nucleophile is the C46. 179–184 (GYGEIG) is a binding site for NADP(+).

This sequence belongs to the glutamyl-tRNA reductase family. In terms of assembly, homodimer.

The enzyme catalyses (S)-4-amino-5-oxopentanoate + tRNA(Glu) + NADP(+) = L-glutamyl-tRNA(Glu) + NADPH + H(+). The protein operates within porphyrin-containing compound metabolism; protoporphyrin-IX biosynthesis; 5-aminolevulinate from L-glutamyl-tRNA(Glu): step 1/2. In terms of biological role, catalyzes the NADPH-dependent reduction of glutamyl-tRNA(Glu) to glutamate 1-semialdehyde (GSA). This chain is Glutamyl-tRNA reductase, found in Clostridium perfringens (strain SM101 / Type A).